A 599-amino-acid chain; its full sequence is UvrABC system protein C (599 aa).

The GIY-YIG domain maps to 15–93 (PCPGVYRMLD…IKALQPRYNV (79 aa)). The region spanning 202-237 (QQVINELVIRMEEASGQLAFEQAAYYRDRIASLRQI) is the UVR domain.

Belongs to the UvrC family. In terms of assembly, interacts with UvrB in an incision complex.

Its subcellular location is the cytoplasm. Its function is as follows. The UvrABC repair system catalyzes the recognition and processing of DNA lesions. UvrC both incises the 5' and 3' sides of the lesion. The N-terminal half is responsible for the 3' incision and the C-terminal half is responsible for the 5' incision. In Nitrosococcus oceani (strain ATCC 19707 / BCRC 17464 / JCM 30415 / NCIMB 11848 / C-107), this protein is UvrABC system protein C.